A 364-amino-acid chain; its full sequence is tRNA 2-selenouridine synthase (364 aa).

Residues Leu-14–Ile-137 form the Rhodanese domain. The active-site S-selanylcysteine intermediate is the Cys-97.

Belongs to the SelU family. As to quaternary structure, monomer.

The enzyme catalyses 5-methylaminomethyl-2-thiouridine(34) in tRNA + selenophosphate + (2E)-geranyl diphosphate + H2O + H(+) = 5-methylaminomethyl-2-selenouridine(34) in tRNA + (2E)-thiogeraniol + phosphate + diphosphate. It catalyses the reaction 5-methylaminomethyl-2-thiouridine(34) in tRNA + (2E)-geranyl diphosphate = 5-methylaminomethyl-S-(2E)-geranyl-thiouridine(34) in tRNA + diphosphate. It carries out the reaction 5-methylaminomethyl-S-(2E)-geranyl-thiouridine(34) in tRNA + selenophosphate + H(+) = 5-methylaminomethyl-2-(Se-phospho)selenouridine(34) in tRNA + (2E)-thiogeraniol. The catalysed reaction is 5-methylaminomethyl-2-(Se-phospho)selenouridine(34) in tRNA + H2O = 5-methylaminomethyl-2-selenouridine(34) in tRNA + phosphate. Involved in the post-transcriptional modification of the uridine at the wobble position (U34) of tRNA(Lys), tRNA(Glu) and tRNA(Gln). Catalyzes the conversion of 2-thiouridine (S2U-RNA) to 2-selenouridine (Se2U-RNA). Acts in a two-step process involving geranylation of 2-thiouridine (S2U) to S-geranyl-2-thiouridine (geS2U) and subsequent selenation of the latter derivative to 2-selenouridine (Se2U) in the tRNA chain. The protein is tRNA 2-selenouridine synthase of Escherichia coli (strain SMS-3-5 / SECEC).